A 691-amino-acid chain; its full sequence is Dynamin-1-like protein (691 aa).

Residues 22–301 (IIQLPQIAVV…LMHHIRDCLP (280 aa)) enclose the Dynamin-type G domain. The interval 32-39 (GTQSSGKS) is G1 motif. 32 to 40 (GTQSSGKSS) contacts GTP. The G2 motif stretch occupies residues 58 to 60 (VTR). The segment at 145 to 148 (DLPG) is G3 motif. Positions 214–217 (TKLD) are G4 motif. GTP-binding positions include 214 to 220 (TKLDLMD) and 245 to 248 (NRSQ). The interval 244–247 (VNRS) is G5 motif. The tract at residues 343–488 (YCNTIEGTAK…NEMVHNLVAI (146 aa)) is middle domain. Composition is skewed to basic and acidic residues over residues 522 to 531 (LPTSVPRDKM) and 551 to 563 (KKGDEGQGEEKTK). Positions 522–573 (LPTSVPRDKMAGGAQAEQEGGTGTWRGMLKKGDEGQGEEKTKLQSSIPASPQ) are disordered. In terms of domain architecture, GED spans 599-690 (CEVIERLIKS…VIAEIRETHL (92 aa)). The interval 609–623 (YFLIVRKNIQDSVPK) is important for homodimerization.

It belongs to the TRAFAC class dynamin-like GTPase superfamily. Dynamin/Fzo/YdjA family. In terms of assembly, homotetramer; dimerizes through the N-terminal GTP-middle region of one molecule binding to the GED domain of another DNM1L molecule. Oligomerizes in a GTP-dependent manner to form membrane-associated tubules with a spiral pattern.

The protein resides in the cytoplasm. The protein localises to the cytosol. It is found in the golgi apparatus. It localises to the endomembrane system. Its subcellular location is the mitochondrion outer membrane. The protein resides in the peroxisome. The protein localises to the membrane. It is found in the clathrin-coated pit. It localises to the cytoplasmic vesicle. Its subcellular location is the secretory vesicle. The protein resides in the synaptic vesicle membrane. The catalysed reaction is GTP + H2O = GDP + phosphate + H(+). Functions in mitochondrial and peroxisomal division. Mediates membrane fission through oligomerization into membrane-associated tubular structures that wrap around the scission site to constrict and sever the mitochondrial membrane through a GTP hydrolysis-dependent mechanism. The specific recruitment at scission sites is mediated by membrane receptors like MFF, MIEF1 and MIEF2 for mitochondrial membranes. While the recruitment by the membrane receptors is GTP-dependent, the following hydrolysis of GTP induces the dissociation from the receptors and allows DNM1L filaments to curl into closed rings that are probably sufficient to sever a double membrane. May play a role in the circadian control of mitochondrial ATP production. The sequence is that of Dynamin-1-like protein from Danio rerio (Zebrafish).